The following is a 454-amino-acid chain: G-protein coupled receptor 39 (454 aa).

Residues 1–34 (MASPSHPSRDCSQVIDHSHVPEFEVATWIKITLI) lie on the Extracellular side of the membrane. 2 cysteine pairs are disulfide-bonded: cysteine 11–cysteine 191 and cysteine 108–cysteine 210. Zn(2+) is bound by residues histidine 17 and histidine 19. A helical membrane pass occupies residues 35-55 (LVYLVIFVVGILGNSVTIRVT). The Cytoplasmic segment spans residues 56 to 69 (QVLQKKGYLQKEVT). Residues 70–89 (DHMVSLACSDILVFLIGMPM) traverse the membrane as a helical segment. Residues 90-109 (EFYSIIWNPLTTPSYTVSCK) are Extracellular-facing. A helical transmembrane segment spans residues 110-131 (VHTFLFEACSYATLLHVLTLSF). At 132–151 (ERYIAICHPFRYKAMSGPCQ) the chain is on the cytoplasmic side. The helical transmembrane segment at 152-172 (VKLLIGFVWVTSALVALPLLF) threads the bilayer. Over 173 to 217 (AMGVEYPLVNVPSHRGLICNRSRTRHQEQPESSNMSICTNLSSRW) the chain is Extracellular. Residues asparagine 192, asparagine 206, and asparagine 212 are each glycosylated (N-linked (GlcNAc...) asparagine). A helical transmembrane segment spans residues 218–242 (TVFQSSIFSAFVVYLVVLVSVAFMC). The Cytoplasmic segment spans residues 243–283 (WSMMQVLRRSKQGTLAAQGQQLQLRKLESQESRSARRQTII). The chain crosses the membrane as a helical span at residues 284–305 (FLELIVVTLAVCWMPNQVRRIM). Residues 306–323 (AAAKPKHDWTKSYFRAYM) lie on the Extracellular side of the membrane. A helical transmembrane segment spans residues 324–344 (ILLPFSDTFFYLSSVVNPLLY). At 345–454 (NVSSQQFRSV…TRNGFQEHEV (110 aa)) the chain is on the cytoplasmic side. Residue serine 397 is modified to Phosphoserine. The interval 415–454 (HSEAKPESKPQELSCESPEPNSERKPANPATRNGFQEHEV) is disordered.

Belongs to the G-protein coupled receptor 1 family. In terms of assembly, interacts with HTR1A. Interacts with GALR1. As to expression, detected in liver, kidney, abomasum, uterus, small intestine and colon.

It is found in the cell membrane. Its function is as follows. Zinc-sensing receptor that can sense changes in extracellular Zn(2+), mediate Zn(2+) signal transmission, and participates in the regulation of numerous physiological processes including glucose homeostasis regulation, gastrointestinal mobility, hormone secretion and cell death. Activation by Zn(2+) in keratinocytes increases the intracellular concentration of Ca(2+) and activates the ERK/MAPK and PI3K/AKT signaling pathways leading to epithelial repair. Plays an essential role in normal wound healing by inducing the production of cytokines including the major inflammatory cytokine IL6 via the PKC/MAPK/CEBPB pathway. Regulates adipose tissue metabolism, especially lipolysis, and regulates the function of lipases, such as hormone-sensitive lipase and adipose triglyceride lipase. Plays a role in the inhibition of cell death and protects against oxidative, endoplasmic reticulum and mitochondrial stress by inducing secretion of the cytoprotective pigment epithelium-derived growth factor (PEDF) and probably other protective transcripts in a GNA13/RHOA/SRE-dependent manner. Forms dynamic heteroreceptor complexes with HTR1A and GALR1 depending on cell type or specific physiological states, resulting in signaling diversity: HTR1A-GPR39 shows additive increase in signaling along the serum response element (SRE) and NF-kappa-B pathways while GALR1 acts as an antagonist blocking SRE. In Bos taurus (Bovine), this protein is G-protein coupled receptor 39 (GPR39).